The chain runs to 323 residues: tRNA dimethylallyltransferase (323 aa).

12 to 19 (GPTAAGKT) contributes to the ATP binding site. 14–19 (TAAGKT) provides a ligand contact to substrate. 2 interaction with substrate tRNA regions span residues 37–40 (DSAL) and 161–165 (QRLMR).

Belongs to the IPP transferase family. As to quaternary structure, monomer. Mg(2+) is required as a cofactor.

It catalyses the reaction adenosine(37) in tRNA + dimethylallyl diphosphate = N(6)-dimethylallyladenosine(37) in tRNA + diphosphate. Functionally, catalyzes the transfer of a dimethylallyl group onto the adenine at position 37 in tRNAs that read codons beginning with uridine, leading to the formation of N6-(dimethylallyl)adenosine (i(6)A). This Pseudomonas aeruginosa (strain LESB58) protein is tRNA dimethylallyltransferase.